The sequence spans 471 residues: Putative ETHYLENE INSENSITIVE 3-like 4 protein (471 aa).

Residues 280-316 (DLKISEDQDDQESSGSKRKSESMEPSKSVYTCQNSSC) are disordered. Residues 304–316 (PSKSVYTCQNSSC) are compositionally biased toward polar residues.

This sequence belongs to the EIN3 family.

The protein localises to the nucleus. In terms of biological role, putative transcription factor that may be involved in the ethylene response pathway. This Arabidopsis thaliana (Mouse-ear cress) protein is Putative ETHYLENE INSENSITIVE 3-like 4 protein (EIL4).